The sequence spans 115 residues: Large ribosomal subunit protein bL20 (115 aa).

The protein belongs to the bacterial ribosomal protein bL20 family.

Binds directly to 23S ribosomal RNA and is necessary for the in vitro assembly process of the 50S ribosomal subunit. It is not involved in the protein synthesizing functions of that subunit. This is Large ribosomal subunit protein bL20 from Prochlorococcus marinus (strain MIT 9301).